The primary structure comprises 383 residues: Probable butyrate kinase (383 aa).

The protein belongs to the acetokinase family.

It localises to the cytoplasm. It catalyses the reaction butanoate + ATP = butanoyl phosphate + ADP. The chain is Probable butyrate kinase from Deinococcus radiodurans (strain ATCC 13939 / DSM 20539 / JCM 16871 / CCUG 27074 / LMG 4051 / NBRC 15346 / NCIMB 9279 / VKM B-1422 / R1).